The sequence spans 62 residues: Metallothionein-4 (62 aa).

The a divalent metal cation site is built by C6, C8, C14, C16, C20, C22, C25, C27, C30, C34, C35, C37, C38, C42, C45, C49, C51, C58, C60, and C61.

It belongs to the metallothionein superfamily. Type 1 family. As to expression, expressed exclusively in stratified squamous epithelia associated with oral epithelia, esophagus, upper stomach, tail, footpads and neonatal skin.

Its function is as follows. Seems to bind zinc and copper. Could play a special role in regulating zinc metabolism during the differentiation of stratified epithelia. The sequence is that of Metallothionein-4 (Mt4) from Mus musculus (Mouse).